A 171-amino-acid polypeptide reads, in one-letter code: Voltage-dependent P/Q-type calcium channel subunit alpha-1A (171 aa).

The helical transmembrane segment at 1–11 (FVTVLGSITDI) threads the bilayer. Residues 1–171 (FVTVLGSITD…LMLNLFVAVI (171 aa)) form an IV repeat. The Extracellular portion of the chain corresponds to 12–18 (LVTEFGN). Residues 19 to 37 (NFINLSFLRLFRAARLIKL) form a helical membrane-spanning segment. Residues 38–56 (LRQGYTIRILLWTFVQSFK) are Cytoplasmic-facing. A helical membrane pass occupies residues 57-76 (ALPYVCLLIAMLFFIYAIIG). At 77-143 (MQVFGNIGIE…ENSGIKEDEC (67 aa)) the chain is on the extracellular side. Residues 144-168 (GNEFAYFYFVSFIFLCSFLMLNLFV) traverse the membrane as a helical segment. Topologically, residues 169–171 (AVI) are cytoplasmic.

The protein belongs to the calcium channel alpha-1 subunit (TC 1.A.1.11) family. CACNA1A subfamily. Voltage-dependent calcium channels are multisubunit complexes, consisting of alpha-1, alpha-2, beta and delta subunits in a 1:1:1:1 ratio. The channel activity is directed by the pore-forming and voltage-sensitive alpha-1 subunit. In many cases, this subunit is sufficient to generate voltage-sensitive calcium channel activity. The auxiliary subunits beta and alpha-2/delta linked by a disulfide bridge regulate the channel activity.

Its subcellular location is the cell membrane. The enzyme catalyses Ca(2+)(in) = Ca(2+)(out). Its function is as follows. The isoform alpha-1A gives rise to P and/or Q-type calcium currents. P/Q-type calcium channels belong to the 'high-voltage activated' (HVA) group. The protein is Voltage-dependent P/Q-type calcium channel subunit alpha-1A (CACNA1A) of Gallus gallus (Chicken).